A 307-amino-acid polypeptide reads, in one-letter code: Putative oxidoreductase YceM (307 aa).

This sequence belongs to the Gfo/Idh/MocA family.

This chain is Putative oxidoreductase YceM (yceM), found in Salmonella typhimurium (strain LT2 / SGSC1412 / ATCC 700720).